A 227-amino-acid polypeptide reads, in one-letter code: UPF0441 protein YPO0661/y3517/YP_2976 (227 aa).

The interval 198–227 is disordered; that stretch reads GGFGESVAKQSSMQRSAATSSKTTTRSMGG. Residues 212-227 are compositionally biased toward low complexity; that stretch reads RSAATSSKTTTRSMGG.

It belongs to the UPF0441 family.

This Yersinia pestis protein is UPF0441 protein YPO0661/y3517/YP_2976.